The primary structure comprises 402 residues: Queuine tRNA-ribosyltransferase-like protein (402 aa).

The protein belongs to the queuine tRNA-ribosyltransferase family.

This chain is Queuine tRNA-ribosyltransferase-like protein, found in Theileria annulata.